A 160-amino-acid polypeptide reads, in one-letter code: uncharacterized protein (160 aa).

Its subcellular location is the cytoplasm. It localises to the nucleus. This is an uncharacterized protein from Schizosaccharomyces pombe (strain 972 / ATCC 24843) (Fission yeast).